We begin with the raw amino-acid sequence, 481 residues long: MKFEGLFLVFNSVSGNHKIIGISYLWLAYWFGMIGFYMSVLIRTELSMSGLKIITMDTLEIYNLLFTLHGLIMVFFNIMTGLFGGIGNYLYPVLLGYCDVVYPRVNLYSLLFQPIGFVLVVSSIYLEIGSGTGWTLYPPLSTSLSNVGIDFIIFGLLAAGIASTLSSVNFITTFTSVKTIGFVIDRISPAAWSIVLTSFLLLLSLPVVTAVFLMVFLDRHYNTMFFESSNSGDPVLYQHLFWFFGHPEVYIMILPGFGIISLLLSTYTTKEMFGNQTMILAMGFNSFVRLFGLGTSYVHIRFGSRYSRYFTTVTILIALPTGNKIFNWVTTLQCVESIKSLGLVLFTVLFIVNFVIGGTTGVVLGNAGIDLALHDTVYVVGHFHFVLSIGAIISMICFIIYIQRMLLFGIILSNRLSSLIAPIFMISVLLTFLPMHFTGFSPLPRRIPDYPDEMWGWNFICTLGATMMLVLKLAILFIISL.

The chain crosses the membrane as a helical span at residues 22 to 42 (ISYLWLAYWFGMIGFYMSVLI). Ca(2+)-binding residues include Glu45 and Gly50. A run of 8 helical transmembrane segments spans residues 64–84 (LLFT…GLFG), 109–129 (SLLF…LEIG), 151–171 (FIIF…VNFI), 194–214 (IVLT…VFLM), 240–260 (LFWF…FGII), 278–298 (MILA…TSYV), 309–329 (YFTT…FNWV), and 343–363 (LVLF…TGVV). Fe(II)-heme a is bound at residue His69. His246 is a Cu cation binding site. The 1'-histidyl-3'-tyrosine (His-Tyr) cross-link spans 246–250 (HPEVY). Tyr250 is a binding site for O2. Residues His374 and Asp375 each contribute to the Mg(2+) site. His382 is a binding site for heme a3. 2 helical membrane passes run 382-402 (HFHF…IIYI) and 420-440 (IAPI…FTGF). His384 contributes to the Fe(II)-heme a binding site. Pro448 contacts Ca(2+). A helical transmembrane segment spans residues 459 to 479 (FICTLGATMMLVLKLAILFII).

This sequence belongs to the heme-copper respiratory oxidase family. In terms of assembly, component of the cytochrome c oxidase (complex IV, CIV), a multisubunit enzyme composed of a catalytic core of 3 subunits and several supernumerary subunits. The complex exists as a monomer or a dimer and forms supercomplexes (SCs) in the inner mitochondrial membrane with ubiquinol-cytochrome c oxidoreductase (cytochrome b-c1 complex, complex III, CIII). Heme is required as a cofactor. The cofactor is Cu cation.

The protein localises to the mitochondrion inner membrane. It carries out the reaction 4 Fe(II)-[cytochrome c] + O2 + 8 H(+)(in) = 4 Fe(III)-[cytochrome c] + 2 H2O + 4 H(+)(out). It functions in the pathway energy metabolism; oxidative phosphorylation. Its function is as follows. Component of the cytochrome c oxidase, the last enzyme in the mitochondrial electron transport chain which drives oxidative phosphorylation. The respiratory chain contains 3 multisubunit complexes succinate dehydrogenase (complex II, CII), ubiquinol-cytochrome c oxidoreductase (cytochrome b-c1 complex, complex III, CIII) and cytochrome c oxidase (complex IV, CIV), that cooperate to transfer electrons derived from NADH and succinate to molecular oxygen, creating an electrochemical gradient over the inner membrane that drives transmembrane transport and the ATP synthase. Cytochrome c oxidase is the component of the respiratory chain that catalyzes the reduction of oxygen to water. Electrons originating from reduced cytochrome c in the intermembrane space (IMS) are transferred via the dinuclear copper A center (CU(A)) of subunit 2 and heme A of subunit 1 to the active site in subunit 1, a binuclear center (BNC) formed by heme A3 and copper B (CU(B)). The BNC reduces molecular oxygen to 2 water molecules using 4 electrons from cytochrome c in the IMS and 4 protons from the mitochondrial matrix. This is Cytochrome c oxidase subunit 1 (MT-CO1) from Theileria parva (East coast fever infection agent).